We begin with the raw amino-acid sequence, 860 residues long: Leucine--tRNA ligase (860 aa).

Positions 73-83 (VLQPIGWDAFG) match the 'HIGH' region motif. Positions 650 to 654 (SPADM) match the 'KMSKS' region motif. Position 653 (Asp-653) interacts with ATP.

Belongs to the class-I aminoacyl-tRNA synthetase family.

It localises to the cytoplasm. It carries out the reaction tRNA(Leu) + L-leucine + ATP = L-leucyl-tRNA(Leu) + AMP + diphosphate. This Shigella flexneri protein is Leucine--tRNA ligase.